The chain runs to 290 residues: Zinc-finger homeodomain protein 2 (290 aa).

Over residues 1–15 (MDFDDHDEGDGDEEM) the composition is skewed to acidic residues. Residues 1–59 (MDFDDHDEGDGDEEMPPMPLSSGYDAPMQPGLGGGGGGVPKPGGGVGGGGGGGGGGGGG) are disordered. The span at 31–59 (GLGGGGGGVPKPGGGVGGGGGGGGGGGGG) shows a compositional bias: gly residues. The segment at 63 to 112 (YRECLKNHAVGIGGHAVDGCGEFMASGEEGSIDALRCAACGCHRNFHRKE) adopts a ZF-HD dimerization-type; degenerate zinc-finger fold. A DNA-binding region (homeobox) is located at residues 226–289 (KKRFRTKFTQ…NNKHTLGKKA (64 aa)).

As to quaternary structure, homo- and heterodimer with other ZFHD proteins.

The protein resides in the nucleus. Putative transcription factor. This chain is Zinc-finger homeodomain protein 2 (ZHD2), found in Oryza sativa subsp. japonica (Rice).